A 476-amino-acid chain; its full sequence is Glycogen synthase (476 aa).

Lysine 15 provides a ligand contact to ADP-alpha-D-glucose.

The protein belongs to the glycosyltransferase 1 family. Bacterial/plant glycogen synthase subfamily.

The catalysed reaction is [(1-&gt;4)-alpha-D-glucosyl](n) + ADP-alpha-D-glucose = [(1-&gt;4)-alpha-D-glucosyl](n+1) + ADP + H(+). Its pathway is glycan biosynthesis; glycogen biosynthesis. Synthesizes alpha-1,4-glucan chains using ADP-glucose. The protein is Glycogen synthase (glgA) of Haemophilus influenzae (strain ATCC 51907 / DSM 11121 / KW20 / Rd).